The following is a 388-amino-acid chain: L-lactate dehydrogenase (388 aa).

Positions 1-380 (MIISAASDYR…SADALSRVTR (380 aa)) constitute an FMN hydroxy acid dehydrogenase domain. Y24 contributes to the substrate binding site. FMN contacts are provided by S106 and Q127. Residue Y129 coordinates substrate. FMN is bound at residue T155. R164 serves as a coordination point for substrate. K251 provides a ligand contact to FMN. H275 (proton acceptor) is an active-site residue. Substrate is bound at residue R278. Position 306–330 (306–330 (DSGIRSGLDVVRMLALGADAVLLGR)) interacts with FMN.

This sequence belongs to the FMN-dependent alpha-hydroxy acid dehydrogenase family. It depends on FMN as a cofactor.

The protein localises to the cell inner membrane. The catalysed reaction is (S)-lactate + A = pyruvate + AH2. In terms of biological role, catalyzes the conversion of L-lactate to pyruvate. Is coupled to the respiratory chain. This is L-lactate dehydrogenase from Xanthomonas axonopodis pv. citri (strain 306).